Here is a 72-residue protein sequence, read N- to C-terminus: Translation initiation factor IF-1 (72 aa).

The S1-like domain maps to 1-72 (MAKEDNIEMQ…TKGRIVFRAR (72 aa)).

The protein belongs to the IF-1 family. In terms of assembly, component of the 30S ribosomal translation pre-initiation complex which assembles on the 30S ribosome in the order IF-2 and IF-3, IF-1 and N-formylmethionyl-tRNA(fMet); mRNA recruitment can occur at any time during PIC assembly.

The protein localises to the cytoplasm. One of the essential components for the initiation of protein synthesis. Stabilizes the binding of IF-2 and IF-3 on the 30S subunit to which N-formylmethionyl-tRNA(fMet) subsequently binds. Helps modulate mRNA selection, yielding the 30S pre-initiation complex (PIC). Upon addition of the 50S ribosomal subunit IF-1, IF-2 and IF-3 are released leaving the mature 70S translation initiation complex. The chain is Translation initiation factor IF-1 from Shewanella baltica (strain OS155 / ATCC BAA-1091).